The chain runs to 446 residues: NADH-quinone oxidoreductase subunit D (446 aa).

Belongs to the complex I 49 kDa subunit family. NDH-1 is composed of 14 different subunits. Subunits NuoB, C, D, E, F, and G constitute the peripheral sector of the complex.

Its subcellular location is the cell membrane. It carries out the reaction a quinone + NADH + 5 H(+)(in) = a quinol + NAD(+) + 4 H(+)(out). In terms of biological role, NDH-1 shuttles electrons from NADH, via FMN and iron-sulfur (Fe-S) centers, to quinones in the respiratory chain. The immediate electron acceptor for the enzyme in this species is believed to be a menaquinone. Couples the redox reaction to proton translocation (for every two electrons transferred, four hydrogen ions are translocated across the cytoplasmic membrane), and thus conserves the redox energy in a proton gradient. This chain is NADH-quinone oxidoreductase subunit D, found in Mycobacterium sp. (strain JLS).